The following is a 434-amino-acid chain: 23S rRNA (uracil(1939)-C(5))-methyltransferase RlmD (434 aa).

The TRAM domain maps to 10-68; that stretch reads RVTTRQIITVTVNDLDPFGQGVARHQGKALFVSGVLPHEQAEVVLVEDKKQYARAEVKR. Cys81, Cys87, Cys90, and Cys162 together coordinate [4Fe-4S] cluster. S-adenosyl-L-methionine is bound by residues Gln265, Phe294, Asn299, Glu315, Asn342, and Asp363. The active-site Nucleophile is the Cys389.

It belongs to the class I-like SAM-binding methyltransferase superfamily. RNA M5U methyltransferase family. RlmD subfamily.

The enzyme catalyses uridine(1939) in 23S rRNA + S-adenosyl-L-methionine = 5-methyluridine(1939) in 23S rRNA + S-adenosyl-L-homocysteine + H(+). Catalyzes the formation of 5-methyl-uridine at position 1939 (m5U1939) in 23S rRNA. This Klebsiella pneumoniae subsp. pneumoniae (strain ATCC 700721 / MGH 78578) protein is 23S rRNA (uracil(1939)-C(5))-methyltransferase RlmD.